The sequence spans 1503 residues: Chromosome partition protein MukB (1503 aa).

Over residues 1-19 (MMNTNELFDQTAVNSSQDK) the composition is skewed to polar residues. The interval 1-21 (MMNTNELFDQTAVNSSQDKPL) is disordered. 65 to 72 (GGNGAGKS) is an ATP binding site. Coiled coils occupy residues 370–495 (MNAL…QRLS), 536–616 (DQKM…HRQQ), 662–697 (MQEMLRKEREATLERDELARTEAALASQISQLSQAD), 865–1173 (EMLM…SAEE), and 1238–1293 (DAIE…LQNI). Residues 696-813 (ADGAEDIRLN…EVPLFGRAAR (118 aa)) are flexible hinge.

It belongs to the SMC family. MukB subfamily. Homodimerization via its hinge domain. Binds to DNA via its C-terminal region. Interacts, and probably forms a ternary complex, with MukE and MukF via its C-terminal region. The complex formation is stimulated by calcium or magnesium. Interacts with tubulin-related protein FtsZ.

The protein localises to the cytoplasm. Its subcellular location is the nucleoid. Plays a central role in chromosome condensation, segregation and cell cycle progression. Functions as a homodimer, which is essential for chromosome partition. Involved in negative DNA supercoiling in vivo, and by this means organize and compact chromosomes. May achieve or facilitate chromosome segregation by condensation DNA from both sides of a centrally located replisome during cell division. This Haemophilus ducreyi (strain 35000HP / ATCC 700724) protein is Chromosome partition protein MukB.